Consider the following 152-residue polypeptide: Deoxyuridine 5'-triphosphate nucleotidohydrolase (152 aa).

Substrate contacts are provided by residues 71–73 (RSG), Asn84, 88–90 (LID), and Met98.

The protein belongs to the dUTPase family. The cofactor is Mg(2+).

It carries out the reaction dUTP + H2O = dUMP + diphosphate + H(+). It participates in pyrimidine metabolism; dUMP biosynthesis; dUMP from dCTP (dUTP route): step 2/2. Functionally, this enzyme is involved in nucleotide metabolism: it produces dUMP, the immediate precursor of thymidine nucleotides and it decreases the intracellular concentration of dUTP so that uracil cannot be incorporated into DNA. The polypeptide is Deoxyuridine 5'-triphosphate nucleotidohydrolase (Serratia proteamaculans (strain 568)).